Reading from the N-terminus, the 102-residue chain is Death-associated protein 1 (102 aa).

Residues 1–102 form a disordered region; it reads MSSPPEGKLE…RTQHIQQPRK (102 aa). The residue at position 2 (Ser2) is an N-acetylserine. Ser3 bears the Phosphoserine; by MTOR mark. N6-acetyllysine is present on Lys29. Residues 32–43 show a composition bias toward basic and acidic residues; sequence HTGDTKEEKDKD. At Ser49 the chain carries Phosphoserine. At Ser51 the chain carries Phosphoserine; by MTOR. Residue Ser91 is modified to Phosphoserine. Positions 92 to 102 are enriched in polar residues; that stretch reads PRTQHIQQPRK.

This sequence belongs to the DAP-DAPL1 family. As to quaternary structure, associates with ribosomes; inhibiting translation. Interacts with eiF5a (EIF5A and EIF5A2); inhibiting translation. Post-translationally, phosphorylated. Phosphorylation by MTOR inhibits the suppressive activity of DAP toward autophagy.

Functionally, ribosome-binding protein involved in ribosome hibernation, a process during which ribosomes are stabilized in an inactive state and preserved from proteasomal degradation. Acts via its association with eiF5a (EIF5A and EIF5A2) at the polypeptide exit tunnel of the ribosome, preventing mRNA translation. Involved in ribosome hibernation in the mature oocyte by preventing mRNA translation, leading to ribosome inactivation. Ribosomes, which are produced in large quantities during oogenesis, are stored and translationally repressed in the oocyte and early embryo. Also acts as a negative regulator of autophagy. Involved in mediating interferon-gamma-induced cell death. This is Death-associated protein 1 from Homo sapiens (Human).